We begin with the raw amino-acid sequence, 336 residues long: Isopentenyl-diphosphate delta-isomerase (336 aa).

A substrate-binding site is contributed by 5–6 (RK). Residues 60-62 (AMT), S90, and N117 contribute to the FMN site. Q147 is a substrate binding site. Mg(2+) is bound at residue E148. Residues K179, S204, T209, 253-255 (GVR), and 274-275 (SR) each bind FMN.

It belongs to the IPP isomerase type 2 family. In terms of assembly, homooctamer. Dimer of tetramers. FMN is required as a cofactor. It depends on NADPH as a cofactor. Mg(2+) serves as cofactor.

It is found in the cytoplasm. It carries out the reaction isopentenyl diphosphate = dimethylallyl diphosphate. In terms of biological role, involved in the biosynthesis of isoprenoids. Catalyzes the 1,3-allylic rearrangement of the homoallylic substrate isopentenyl (IPP) to its allylic isomer, dimethylallyl diphosphate (DMAPP). This chain is Isopentenyl-diphosphate delta-isomerase, found in Streptococcus pneumoniae (strain 70585).